The primary structure comprises 720 residues: Protein-glutamine gamma-glutamyltransferase 5 (720 aa).

Position 2 is an N-acetylalanine (Ala-2). Active-site residues include Cys-278, His-337, and Asp-360. Asn-400, Asp-402, Glu-448, and Glu-453 together coordinate Ca(2+). Residues 470–499 are disordered; the sequence is HGSQRGAELQPSRPTSLSQDSPRSLHTPSL. The segment covering 481–496 has biased composition (polar residues); sequence SRPTSLSQDSPRSLHT.

The protein belongs to the transglutaminase superfamily. Transglutaminase family. Ca(2+) serves as cofactor. Expressed in foreskin keratinocytes.

The protein resides in the cytoplasm. The catalysed reaction is L-glutaminyl-[protein] + L-lysyl-[protein] = [protein]-L-lysyl-N(6)-5-L-glutamyl-[protein] + NH4(+). Catalyzes the cross-linking of proteins and the conjugation of polyamines to proteins. Contributes to the formation of the cornified cell envelope of keratinocytes. The protein is Protein-glutamine gamma-glutamyltransferase 5 (TGM5) of Homo sapiens (Human).